Here is a 464-residue protein sequence, read N- to C-terminus: UDP-N-acetylmuramate--L-alanine ligase (464 aa).

Position 111–117 (111–117 (GAHGKTT)) interacts with ATP.

Belongs to the MurCDEF family.

It is found in the cytoplasm. The enzyme catalyses UDP-N-acetyl-alpha-D-muramate + L-alanine + ATP = UDP-N-acetyl-alpha-D-muramoyl-L-alanine + ADP + phosphate + H(+). The protein operates within cell wall biogenesis; peptidoglycan biosynthesis. Cell wall formation. The polypeptide is UDP-N-acetylmuramate--L-alanine ligase (Dictyoglomus turgidum (strain DSM 6724 / Z-1310)).